The sequence spans 685 residues: Protein arginine N-methyltransferase 7 (685 aa).

2 SAM-dependent MTase PRMT-type domains span residues 14–355 and 364–685; these read QATW…YSLW and AESI…LKSI.

Belongs to the class I-like SAM-binding methyltransferase superfamily. Protein arginine N-methyltransferase family. PRMT7 subfamily.

Its function is as follows. Essential arginine methyltransferase that can both catalyze the formation of omega-N monomethylarginine (MMA) and symmetrical dimethylarginine (sDMA). Specifically mediates the symmetrical dimethylation of arginine residues in the small nuclear ribonucleoproteins SmD1 and SmD3. The protein is Protein arginine N-methyltransferase 7 (Art7) of Drosophila willistoni (Fruit fly).